A 491-amino-acid chain; its full sequence is 2,3-bisphosphoglycerate-independent phosphoglycerate mutase (491 aa).

2 residues coordinate Mn(2+): Asp11 and Ser61. Catalysis depends on Ser61, which acts as the Phosphoserine intermediate. Substrate contacts are provided by residues His118, 147–148 (RD), Arg177, Arg183, 247–250 (RNDR), and Lys320. Mn(2+) is bound by residues Asp386, His390, Asp427, His428, and His445.

This sequence belongs to the BPG-independent phosphoglycerate mutase family. In terms of assembly, monomer. Requires Mn(2+) as cofactor.

The enzyme catalyses (2R)-2-phosphoglycerate = (2R)-3-phosphoglycerate. It participates in carbohydrate degradation; glycolysis; pyruvate from D-glyceraldehyde 3-phosphate: step 3/5. Functionally, catalyzes the interconversion of 2-phosphoglycerate and 3-phosphoglycerate. The protein is 2,3-bisphosphoglycerate-independent phosphoglycerate mutase of Helicobacter pylori (strain J99 / ATCC 700824) (Campylobacter pylori J99).